A 760-amino-acid chain; its full sequence is MTDSQDNRTPESPQGVDRKAEGGCPVLHDGVTAQGSESENPAIDSPTPRTGGRPNSLKDWWPNHLDLSVLHAHSSKSSPLDPGFRYSEEFEKLDIEALRRDIVEVLHTSQDWWPADFGHYGGLFVRMAWHAAGTYRIHDGRGGAGQGAQRFAPLNSWPDNANLDKARRLLWPVKQKHGQKISWADLIVFAGNVALEDMGFTTFGFGFGREDIWEPEEIYWGPEDTWLGDERYSGDRELSNPLGAVQMGLIYVNPEGPNGNPDPLASARDIRETFARMAMNDEETVALIAGGHTFGKTHGAGDADLVGPEPEAAPLEAQGLGWHSSFGSGKGEDTITSGIEVTWTYHPTRWDNEFFHILYAYEWELMKSAAGANQWRPKNGAGADMVPDAHDPSKRREPRMLTSDLALRFDPEYAKISSRFKDHPEEFALAFAKAWYKLLHRDLGPIARYLGPLVGETQIWQDPVPAVDHELVSDDDVAALKAKVLDSGLSVAELVSTAWASAASFRSTDKRGGANGARIRLEPQRSWAVNQPEQLAGVLDRLEGIQREFNEAGGAKISLADLIVLAGSAAVEKAAKDGGVDVTVPFRAGRTDASQEQTDVDSFAVLEPRADGFRNYLLENEKAQPEVLLVERAYLLGLTAPEMTVLVGGLRALGNNVGGSGHGVLTDRPGVLTNDFFANLLAPGAQWKASESEANVYEIRDLASGELRWTATAVDLIFGSNSQLRSLAEVYASADAREKFVRDFVAAWVKVMDADRFDLA.

The segment at 1–57 (MTDSQDNRTPESPQGVDRKAEGGCPVLHDGVTAQGSESENPAIDSPTPRTGGRPNSL) is disordered. Positions 129 to 251 (WHAAGTYRIH…LGAVQMGLIY (123 aa)) form a cross-link, tryptophyl-tyrosyl-methioninium (Trp-Tyr) (with M-277). H130 functions as the Proton acceptor in the catalytic mechanism. The tryptophyl-tyrosyl-methioninium (Tyr-Met) (with W-129) cross-link spans 251–277 (YVNPEGPNGNPDPLASARDIRETFARM). Residue H292 participates in heme b binding.

Belongs to the peroxidase family. Peroxidase/catalase subfamily. As to quaternary structure, homodimer or homotetramer. Heme b is required as a cofactor. In terms of processing, formation of the three residue Trp-Tyr-Met cross-link is important for the catalase, but not the peroxidase activity of the enzyme.

It carries out the reaction H2O2 + AH2 = A + 2 H2O. It catalyses the reaction 2 H2O2 = O2 + 2 H2O. In terms of biological role, bifunctional enzyme with both catalase and broad-spectrum peroxidase activity. The protein is Catalase-peroxidase of Nocardioides sp. (strain ATCC BAA-499 / JS614).